Here is a 129-residue protein sequence, read N- to C-terminus: Small ribosomal subunit protein uS11 (129 aa).

The protein belongs to the universal ribosomal protein uS11 family. As to quaternary structure, part of the 30S ribosomal subunit. Interacts with proteins S7 and S18. Binds to IF-3.

Functionally, located on the platform of the 30S subunit, it bridges several disparate RNA helices of the 16S rRNA. Forms part of the Shine-Dalgarno cleft in the 70S ribosome. The sequence is that of Small ribosomal subunit protein uS11 from Zymomonas mobilis subsp. mobilis (strain ATCC 31821 / ZM4 / CP4).